A 77-amino-acid chain; its full sequence is NADH-ubiquinone oxidoreductase chain 4L (77 aa).

2 helical membrane-spanning segments follow: residues L18–G38 and M44–V64.

This sequence belongs to the complex I subunit 4L family.

The protein resides in the mitochondrion membrane. It catalyses the reaction a ubiquinone + NADH + 5 H(+)(in) = a ubiquinol + NAD(+) + 4 H(+)(out). Core subunit of the mitochondrial membrane respiratory chain NADH dehydrogenase (Complex I) that is believed to belong to the minimal assembly required for catalysis. Complex I functions in the transfer of electrons from NADH to the respiratory chain. The immediate electron acceptor for the enzyme is believed to be ubiquinone. In Ascaris suum (Pig roundworm), this protein is NADH-ubiquinone oxidoreductase chain 4L (ND4L).